Consider the following 210-residue polypeptide: Ribonuclease HII (210 aa).

In terms of domain architecture, RNase H type-2 spans 18–210; the sequence is GLIAGVDEVG…FKPVKALLGL (193 aa). The a divalent metal cation site is built by Asp24, Glu25, and Asp116.

The protein belongs to the RNase HII family. The cofactor is Mn(2+). Mg(2+) serves as cofactor.

It is found in the cytoplasm. The catalysed reaction is Endonucleolytic cleavage to 5'-phosphomonoester.. Functionally, endonuclease that specifically degrades the RNA of RNA-DNA hybrids. The sequence is that of Ribonuclease HII from Shewanella baltica (strain OS223).